Consider the following 436-residue polypeptide: Chromosomal replication initiator protein DnaA (436 aa).

A domain I, interacts with DnaA modulators region spans residues 1-69 (MLADEILELL…AYLYEVKTGK (69 aa)). The interval 69–99 (KKPEVEITSQTKLKNIKQNQVNVKQIKAQSS) is domain II. Residues 100 to 314 (ILNPGYTFEN…GAIINLNAYA (215 aa)) are domain III, AAA+ region. Residues glycine 144, glycine 146, lysine 147, and threonine 148 each coordinate ATP. Residues 315 to 436 (SLMRVEITLE…EIKNKILTKG (122 aa)) are domain IV, binds dsDNA.

Belongs to the DnaA family. In terms of assembly, oligomerizes as a right-handed, spiral filament on DNA at oriC.

It is found in the cytoplasm. Its function is as follows. Plays an essential role in the initiation and regulation of chromosomal replication. ATP-DnaA binds to the origin of replication (oriC) to initiate formation of the DNA replication initiation complex once per cell cycle. Binds the DnaA box (a 9 base pair repeat at the origin) and separates the double-stranded (ds)DNA. Forms a right-handed helical filament on oriC DNA; dsDNA binds to the exterior of the filament while single-stranded (ss)DNA is stabiized in the filament's interior. The ATP-DnaA-oriC complex binds and stabilizes one strand of the AT-rich DNA unwinding element (DUE), permitting loading of DNA polymerase. After initiation quickly degrades to an ADP-DnaA complex that is not apt for DNA replication. Binds acidic phospholipids. This Campylobacter concisus (strain 13826) protein is Chromosomal replication initiator protein DnaA.